The primary structure comprises 250 residues: uncharacterized protein (250 aa).

This is an uncharacterized protein from Rickettsia prowazekii (strain Madrid E).